A 107-amino-acid chain; its full sequence is Translation initiation factor IF-1, chloroplastic (107 aa).

Residues 8 to 83 (REKKNPREAK…SKGRIIYRLP (76 aa)) form the S1-like domain.

The protein belongs to the IF-1 family. Component of the 30S ribosomal translation pre-initiation complex which assembles on the 30S ribosome in the order IF-2 and IF-3, IF-1 and N-formylmethionyl-tRNA(fMet); mRNA recruitment can occur at any time during PIC assembly.

Its subcellular location is the plastid. It localises to the chloroplast. Functionally, one of the essential components for the initiation of protein synthesis. Stabilizes the binding of IF-2 and IF-3 on the 30S subunit to which N-formylmethionyl-tRNA(fMet) subsequently binds. Helps modulate mRNA selection, yielding the 30S pre-initiation complex (PIC). Upon addition of the 50S ribosomal subunit IF-1, IF-2 and IF-3 are released leaving the mature 70S translation initiation complex. The polypeptide is Translation initiation factor IF-1, chloroplastic (Lolium perenne (Perennial ryegrass)).